Consider the following 180-residue polypeptide: Large ribosomal subunit protein uL5 (180 aa).

It belongs to the universal ribosomal protein uL5 family. Part of the 50S ribosomal subunit; part of the 5S rRNA/L5/L18/L25 subcomplex. Contacts the 5S rRNA and the P site tRNA. Forms a bridge to the 30S subunit in the 70S ribosome.

This is one of the proteins that bind and probably mediate the attachment of the 5S RNA into the large ribosomal subunit, where it forms part of the central protuberance. In the 70S ribosome it contacts protein S13 of the 30S subunit (bridge B1b), connecting the 2 subunits; this bridge is implicated in subunit movement. Contacts the P site tRNA; the 5S rRNA and some of its associated proteins might help stabilize positioning of ribosome-bound tRNAs. This is Large ribosomal subunit protein uL5 from Acholeplasma laidlawii (strain PG-8A).